The sequence spans 473 residues: Photosystem II CP43 reaction center protein (473 aa).

A propeptide spanning residues 1–14 (MKILYSLRRYFHVE) is cleaved from the precursor. An N-acetylthreonine modification is found at Thr15. A Phosphothreonine modification is found at Thr15. Helical transmembrane passes span 69–93 (LFEVAHFVPEKPMYEQGLILLPHLA), 134–155 (LIGPETLEESFPFFGYVWKDKN), 178–200 (KAIWFGGLYDTWAPGGGDVRKIT), 255–275 (KPFAWARRAFVWSGEAYLSYS), and 291–312 (WFNNTAYPSEFYGPTGPEASQA). Glu367 is a [CaMn4O5] cluster binding site. A helical membrane pass occupies residues 447 to 471 (RARAAAAGFEKGIDRDSEPVLYMEP).

Belongs to the PsbB/PsbC family. PsbC subfamily. PSII is composed of 1 copy each of membrane proteins PsbA, PsbB, PsbC, PsbD, PsbE, PsbF, PsbH, PsbI, PsbJ, PsbK, PsbL, PsbM, PsbT, PsbX, PsbY, PsbZ, Psb30/Ycf12, at least 3 peripheral proteins of the oxygen-evolving complex and a large number of cofactors. It forms dimeric complexes. Binds multiple chlorophylls and provides some of the ligands for the Ca-4Mn-5O cluster of the oxygen-evolving complex. It may also provide a ligand for a Cl- that is required for oxygen evolution. PSII binds additional chlorophylls, carotenoids and specific lipids. is required as a cofactor.

The protein localises to the plastid. It is found in the chloroplast thylakoid membrane. Functionally, one of the components of the core complex of photosystem II (PSII). It binds chlorophyll and helps catalyze the primary light-induced photochemical processes of PSII. PSII is a light-driven water:plastoquinone oxidoreductase, using light energy to abstract electrons from H(2)O, generating O(2) and a proton gradient subsequently used for ATP formation. This is Photosystem II CP43 reaction center protein from Chara vulgaris (Common stonewort).